Consider the following 293-residue polypeptide: Elongation factor Ts (293 aa).

The interval 80–83 (TDFV) is involved in Mg(2+) ion dislocation from EF-Tu.

This sequence belongs to the EF-Ts family.

It is found in the cytoplasm. Its function is as follows. Associates with the EF-Tu.GDP complex and induces the exchange of GDP to GTP. It remains bound to the aminoacyl-tRNA.EF-Tu.GTP complex up to the GTP hydrolysis stage on the ribosome. This is Elongation factor Ts from Aeromonas hydrophila subsp. hydrophila (strain ATCC 7966 / DSM 30187 / BCRC 13018 / CCUG 14551 / JCM 1027 / KCTC 2358 / NCIMB 9240 / NCTC 8049).